A 152-amino-acid polypeptide reads, in one-letter code: UPF0756 membrane protein EF_1246 (152 aa).

Helical transmembrane passes span 4–24 (WLFL…SLLI), 52–72 (LGVT…QIGL), 85–105 (WLGI…VGLI), and 115–135 (LVFG…GPII).

It belongs to the UPF0756 family.

Its subcellular location is the cell membrane. The polypeptide is UPF0756 membrane protein EF_1246 (Enterococcus faecalis (strain ATCC 700802 / V583)).